We begin with the raw amino-acid sequence, 469 residues long: MKPTVALVGRPNVGKSTLFNRLTRSRDALVADQPGLTRDRHYGQGRVGEKPYLVVDTGGFEPVVDEGILFEMAKQTLQAVDEADAVVFLVDGRAGLTPQDKIIANRLRQLDRPVFLAVNKAEGMKHAIAGAEFHELALGEPLVISAAHGDGVRELMELVLEGFPDEVEEEDSRHPKFAVIGRPNVGKSTLVNAILGEERVIAFDQAGTTRDSIYIDFEREGHTYTIIDTAGVRRRAKVNEMLEKFSVIKTMKAIEDANVAVLVLDAQLDISEQDATIAGFALEAGRALVVAVNKWDNLDGEQKENVRREIARKLNFLDFAKFHYISAIEGRGVADLFKSIDEAYRAAMSKLATPKLTRVLQVALERQQPPRSGLIRPKMRYAHQGGQNPPVIVVHGNALDSIPASYTRYLEHTFRKVFKLQGTPLRVQYKSSENPFDNDEKDKPRAKPKPMSKMRGREKEVRYGKNSKK.

EngA-type G domains follow at residues 3–167 (PTVA…PDEV) and 175–348 (PKFA…RAAM). Residues 9-16 (GRPNVGKS), 56-60 (DTGGF), 119-122 (NKAE), 181-188 (GRPNVGKS), 228-232 (DTAGV), and 293-296 (NKWD) each bind GTP. In terms of domain architecture, KH-like spans 349 to 433 (SKLATPKLTR…PLRVQYKSSE (85 aa)). The tract at residues 429 to 469 (YKSSENPFDNDEKDKPRAKPKPMSKMRGREKEVRYGKNSKK) is disordered.

The protein belongs to the TRAFAC class TrmE-Era-EngA-EngB-Septin-like GTPase superfamily. EngA (Der) GTPase family. As to quaternary structure, associates with the 50S ribosomal subunit.

In terms of biological role, GTPase that plays an essential role in the late steps of ribosome biogenesis. This Chromobacterium violaceum (strain ATCC 12472 / DSM 30191 / JCM 1249 / CCUG 213 / NBRC 12614 / NCIMB 9131 / NCTC 9757 / MK) protein is GTPase Der.